The primary structure comprises 66 residues: MAVPKRRKSKSKVRTKRAHHAIGKPNLVPCPNCNSYRLPHRICPTCGFYKTGIVLEPKVKKPKEEN.

The protein belongs to the bacterial ribosomal protein bL32 family.

This Leptospira interrogans serogroup Icterohaemorrhagiae serovar copenhageni (strain Fiocruz L1-130) protein is Large ribosomal subunit protein bL32.